The sequence spans 138 residues: Acidic phospholipase A2 Tpu-E6a (138 aa).

A signal peptide spans 1 to 16 (MRTLWIMAVLLLGVKG). 7 disulfide bridges follow: C42-C131, C44-C60, C59-C111, C65-C138, C66-C104, C73-C97, and C91-C102. Ca(2+) contacts are provided by Y43, G45, and G47. H63 is an active-site residue. D64 is a Ca(2+) binding site. D105 is a catalytic residue.

In terms of assembly, monomer. Ca(2+) serves as cofactor. In terms of tissue distribution, expressed by the venom gland.

It localises to the secreted. It carries out the reaction a 1,2-diacyl-sn-glycero-3-phosphocholine + H2O = a 1-acyl-sn-glycero-3-phosphocholine + a fatty acid + H(+). Its function is as follows. Snake venom phospholipase A2 (PLA2) that impairs hemostasis. It weakly inhibits ADP-induced platelet aggregation when tested on platelet rich plasma from human and rabbit blood (15-25% of inhibition at 5-10 ug of enzyme), and dose-dependently inhibits blood coagulation, possibly by inhibiting thrombin activation. Exhibits high hydrolytic activities toward L-dipalmitoyl phosphatidylcholine. PLA2 catalyzes the calcium-dependent hydrolysis of the 2-acyl groups in 3-sn-phosphoglycerides. This Craspedocephalus puniceus (Flat-nosed pitviper) protein is Acidic phospholipase A2 Tpu-E6a.